Consider the following 50-residue polypeptide: Small ribosomal subunit protein eS31 (50 aa).

Zn(2+) contacts are provided by C22, C25, C40, and C43. The segment at 22–43 (CPRCGPGVFMADHGDRWACGKC) adopts a C4-type zinc-finger fold.

This sequence belongs to the eukaryotic ribosomal protein eS31 family. As to quaternary structure, part of the 30S ribosomal subunit. It depends on Zn(2+) as a cofactor.

This Pyrococcus horikoshii (strain ATCC 700860 / DSM 12428 / JCM 9974 / NBRC 100139 / OT-3) protein is Small ribosomal subunit protein eS31.